The primary structure comprises 200 residues: Large ribosomal subunit protein uL4 (200 aa).

The tract at residues 42-65 is disordered; the sequence is TRAQKTRSEVSGGGAKPWRQKGTG.

The protein belongs to the universal ribosomal protein uL4 family. Part of the 50S ribosomal subunit.

Functionally, one of the primary rRNA binding proteins, this protein initially binds near the 5'-end of the 23S rRNA. It is important during the early stages of 50S assembly. It makes multiple contacts with different domains of the 23S rRNA in the assembled 50S subunit and ribosome. In terms of biological role, forms part of the polypeptide exit tunnel. In Vibrio cholerae serotype O1 (strain ATCC 39541 / Classical Ogawa 395 / O395), this protein is Large ribosomal subunit protein uL4.